Consider the following 215-residue polypeptide: Small ribosomal subunit protein uS3c (215 aa).

The region spanning 43 to 116 (IKNYIKKNMK…KLNMAITRIA (74 aa)) is the KH type-2 domain.

This sequence belongs to the universal ribosomal protein uS3 family. As to quaternary structure, part of the 30S ribosomal subunit.

It localises to the plastid. The protein localises to the chloroplast. The polypeptide is Small ribosomal subunit protein uS3c (rps3) (Morus indica (Mulberry)).